Consider the following 123-residue polypeptide: UPF0212 protein rrnAC0441 (123 aa).

Belongs to the UPF0212 family.

The sequence is that of UPF0212 protein rrnAC0441 from Haloarcula marismortui (strain ATCC 43049 / DSM 3752 / JCM 8966 / VKM B-1809) (Halobacterium marismortui).